The sequence spans 282 residues: Stage 0 sporulation protein J (282 aa).

The segment at residues 139 to 158 is a DNA-binding region (H-T-H motif); that stretch reads EQLAKRLGKSRPHIANHLRL.

The protein belongs to the ParB family.

It is found in the cytoplasm. The protein resides in the nucleoid. Required for the initiation of sporulation and for normal chromosome segregation. Antagonizes sporulation inhibition by Soj. It probably interacts with a specific DNA site and other proteins involved in partitioning and cell division, and antagonizes Soj in response to cell cycle events related to chromosome partitioning. In Bacillus subtilis (strain 168), this protein is Stage 0 sporulation protein J.